Consider the following 298-residue polypeptide: Palmitoyl-protein thioesterase 1 (298 aa).

The first 16 residues, 1-16 (MRYFPLLLCLLAITTA), serve as a signal peptide directing secretion. A glycan (N-linked (GlcNAc...) asparagine) is linked at N20. 3 disulfide bridges follow: C37-C38, C88-C120, and C144-C151. The Nucleophile role is filled by S107. The active site involves D224. N250 carries an N-linked (GlcNAc...) asparagine glycan. H280 is a catalytic residue.

The protein belongs to the palmitoyl-protein thioesterase family.

It carries out the reaction S-hexadecanoyl-L-cysteinyl-[protein] + H2O = L-cysteinyl-[protein] + hexadecanoate + H(+). Functionally, removes thioester-linked fatty acyl groups such as palmitate (hexadecanoate) from modified cysteine residues in proteins or peptides. In Caenorhabditis elegans, this protein is Palmitoyl-protein thioesterase 1 (ppt-1).